The following is a 411-amino-acid chain: Glucose-1-phosphate adenylyltransferase (411 aa).

Alpha-D-glucose 1-phosphate contacts are provided by residues glycine 161, 176 to 177 (EK), and serine 195.

This sequence belongs to the bacterial/plant glucose-1-phosphate adenylyltransferase family. In terms of assembly, homotetramer.

The enzyme catalyses alpha-D-glucose 1-phosphate + ATP + H(+) = ADP-alpha-D-glucose + diphosphate. Its pathway is glycan biosynthesis; glycogen biosynthesis. Its function is as follows. Involved in the biosynthesis of ADP-glucose, a building block required for the elongation reactions to produce glycogen. Catalyzes the reaction between ATP and alpha-D-glucose 1-phosphate (G1P) to produce pyrophosphate and ADP-Glc. This is Glucose-1-phosphate adenylyltransferase from Anaeromyxobacter sp. (strain Fw109-5).